We begin with the raw amino-acid sequence, 647 residues long: Probable cobalt/nickel-exporting P-type ATPase (647 aa).

Transmembrane regions (helical) follow at residues 33 to 53 (WAAA…LGAP), 55 to 75 (AVVW…PAWV), 94 to 114 (AAIG…IVIF), 260 to 280 (AGVV…GADL), and 291 to 311 (MIVA…LSAI). Residue Asp-339 is the 4-aspartylphosphate intermediate of the active site. Mg(2+) is bound by residues Asp-532 and Asp-536. A helical membrane pass occupies residues 587–607 (VIANLVMAGAAITTLVLWDLF).

The protein belongs to the cation transport ATPase (P-type) (TC 3.A.3) family. Type IB subfamily.

Its subcellular location is the cell membrane. The catalysed reaction is Ni(2+)(out) + ATP + H2O = Ni(2+)(in) + ADP + phosphate + H(+). It carries out the reaction Co(2+)(out) + ATP + H2O = Co(2+)(in) + ADP + phosphate + H(+). Involved in heavy metal homeostasis. Probably exports nickel and cobalt ions out of the cell. In Mycolicibacterium smegmatis (strain ATCC 700084 / mc(2)155) (Mycobacterium smegmatis), this protein is Probable cobalt/nickel-exporting P-type ATPase (ctpD).